The sequence spans 558 residues: V-set and immunoglobulin domain-containing protein 10 (558 aa).

A signal peptide spans 1-20 (MAGLRVLLCLGALLARQGSA). Over 21-426 (GLQLLLNPSR…IWLSVKEPLN (406 aa)) the chain is Extracellular. N-linked (GlcNAc...) asparagine glycosylation is found at Asn-32, Asn-60, Asn-121, Asn-150, Asn-159, and Asn-218. Ig-like C2-type domains lie at 37 to 140 (PNSE…RLRV), 144 to 235 (PAYV…RKVT), 248 to 327 (PQCS…VKLS), and 332 to 420 (PSQP…IWLS). Cys-65 and Cys-124 are oxidised to a cystine. 2 disulfides stabilise this stretch: Cys-174–Cys-221 and Cys-265–Cys-308. Asn-344 is a glycosylation site (N-linked (GlcNAc...) asparagine). A disulfide bridge connects residues Cys-349 and Cys-404. A helical membrane pass occupies residues 427 to 447 (IGGIVGTVVSLLLLGLAVVSG). The Cytoplasmic portion of the chain corresponds to 448-558 (LTLYYSPAFW…GIVQEDGKPV (111 aa)). The span at 477-506 (DSEEEEEEEEEEEEKEDVAEEVEQETNETE) shows a compositional bias: acidic residues. 2 disordered regions span residues 477–515 (DSEE…ISKH) and 532–558 (MGNG…GKPV).

The protein resides in the membrane. The chain is V-set and immunoglobulin domain-containing protein 10 (Vsig10) from Mus musculus (Mouse).